Here is a 163-residue protein sequence, read N- to C-terminus: MKVNGDVLKYGDNIDTDVIIPARYLNTSVPEELAKHCMEDLDVDFLKKLKTGDIVVGGRNFGCGSSREHAPICIKAAGVSCVIAKSFARIFYRNSINIGFPILECEEAVNDASTGDKLEVDFIEGIIKNVTLNKEYKAQPFPDFMLKIMKNEGLTNCVKKGLF.

The protein belongs to the LeuD family. LeuD type 2 subfamily. In terms of assembly, heterodimer of LeuC and LeuD.

It catalyses the reaction (2R,3S)-3-isopropylmalate = (2S)-2-isopropylmalate. It participates in amino-acid biosynthesis; L-leucine biosynthesis; L-leucine from 3-methyl-2-oxobutanoate: step 2/4. Functionally, catalyzes the isomerization between 2-isopropylmalate and 3-isopropylmalate, via the formation of 2-isopropylmaleate. This chain is 3-isopropylmalate dehydratase small subunit (leuD), found in Clostridium acetobutylicum (strain ATCC 824 / DSM 792 / JCM 1419 / IAM 19013 / LMG 5710 / NBRC 13948 / NRRL B-527 / VKM B-1787 / 2291 / W).